The chain runs to 420 residues: Bicoumarin synthase ktnC (420 aa).

Cys362 is a binding site for heme.

Belongs to the cytochrome P450 family. The cofactor is heme.

It catalyses the reaction 2 7-demethylsiderin + NADPH + O2 = orlandin + NADP(+) + 2 H2O. It participates in secondary metabolite biosynthesis. Its function is as follows. Non-reducing polyketide synthase; part of the gene cluster that mediates the biosynthesis of the bicoumarin kotanin. The non-reducing polyketide synthase ktnS first catalyzes the formation of the pentaketidic 4,7-dihydroxy-5-methylcoumarin from acetyl coenzyme A and 4 malonyl coenzyme A molecules. Further O-methylation by ktnB leads to the formation of 7-demethylsiderin. Then, an oxidative phenol coupling catalyzed by the cytochrome P450 monooxygenase ktnC forms the 8,8'-dimer P-orlandin via dimerization the monomeric precursor, 7-demethylsiderin. P-orlandin is subsequently O-methylated in a stepwise fashion to demethylkotanin and kotanin. The protein is Bicoumarin synthase ktnC of Aspergillus niger (strain ATCC MYA-4892 / CBS 513.88 / FGSC A1513).